The chain runs to 193 residues: Dual-action ribosomal maturation protein DarP (193 aa).

This sequence belongs to the DarP family.

Its subcellular location is the cytoplasm. In terms of biological role, member of a network of 50S ribosomal subunit biogenesis factors which assembles along the 30S-50S interface, preventing incorrect 23S rRNA structures from forming. Promotes peptidyl transferase center (PTC) maturation. This Vibrio cholerae serotype O1 (strain ATCC 39315 / El Tor Inaba N16961) protein is Dual-action ribosomal maturation protein DarP.